The sequence spans 395 residues: Phosphoserine aminotransferase (395 aa).

Phosphothreonine is present on threonine 20. 80 to 81 (GT) contributes to the pyridoxal 5'-phosphate binding site. Serine 112 carries the post-translational modification Phosphoserine. Residues tryptophan 113, threonine 170, aspartate 194, and glutamine 217 each contribute to the pyridoxal 5'-phosphate site. The residue at position 218 (lysine 218) is an N6-(pyridoxal phosphate)lysine. 271–272 (NT) contributes to the pyridoxal 5'-phosphate binding site.

The protein belongs to the class-V pyridoxal-phosphate-dependent aminotransferase family. SerC subfamily. As to quaternary structure, homodimer. The cofactor is pyridoxal 5'-phosphate.

It catalyses the reaction O-phospho-L-serine + 2-oxoglutarate = 3-phosphooxypyruvate + L-glutamate. The enzyme catalyses 4-(phosphooxy)-L-threonine + 2-oxoglutarate = (R)-3-hydroxy-2-oxo-4-phosphooxybutanoate + L-glutamate. Its pathway is amino-acid biosynthesis; L-serine biosynthesis; L-serine from 3-phospho-D-glycerate: step 2/3. Functionally, phosphoserine aminotransferase (PSAT) is a pyridoxal 5'-phosphate-dependent enzyme involved in the second step of the phosphorylated pathway of serine biosynthesis. Catalyzes the reversible conversion of 3-phosphohydroxypyruvate to phosphoserine and of 3-hydroxy-2-oxo-4-phosphonooxybutanoate to phosphohydroxythreonine. Plays an indirect role in purine biosynthesis. The polypeptide is Phosphoserine aminotransferase (Saccharomyces cerevisiae (strain ATCC 204508 / S288c) (Baker's yeast)).